The primary structure comprises 358 residues: MATEQWFEGSLPLDPGETPPPDALEPGTPPCGDPSRSTPPGRPGNPSEPDPEDAEGRLAEARASTSSPKPLVPRPGPAPPRLSLDTLFSPITQQLRYLLKKADDFQSYLLYSRDQVQKEQLAKAMPTFLQMCEPYFLYLEAAARSIPPIYGPLQELVRKGLLEISQQLTLRLEQLVLMYASFGFVDLEEMNPLSISCFFCGRFSISLSHEVSIFRYCAPTAYTASRFPRYLYKKMRWHLEATPEAPGRGQDSLVDYYFLCYRDTWEDTGQSPANSCPQIQKLWSIGRWVPLGPAEDDLYSWILCPQPLGDYQQLLTIGFEEPTPTLATDLLVQILTGQAGQARPPSAAGPAGWAAQGS.

The disordered stretch occupies residues 1–84 (MATEQWFEGS…PGPAPPRLSL (84 aa)). Pro residues-rich tracts occupy residues 17–32 (ETPP…PPCG) and 70–80 (PLVPRPGPAPP).

This sequence belongs to the UPF0575 family.

The chain is UPF0575 protein C19orf67 (C19orf67) from Homo sapiens (Human).